The primary structure comprises 145 residues: MTTRREGRELALQALYSKDLVLQDANSTLKRITESFSEGEEPTLSVNSKAYAFASELVNGVVSNLQQIDSRIAEKSKHWSMARMARVDLNILRLAVFELLYRPDIPKNVTMNEAIEVAKKFGADDSASFVNGILDEIASTVTDKE.

The protein belongs to the NusB family.

Its function is as follows. Involved in transcription antitermination. Required for transcription of ribosomal RNA (rRNA) genes. Binds specifically to the boxA antiterminator sequence of the ribosomal RNA (rrn) operons. This is Transcription antitermination protein NusB from Geobacter sp. (strain M21).